A 351-amino-acid polypeptide reads, in one-letter code: Transmembrane and coiled-coil domain-containing protein 5B (351 aa).

A coiled-coil region spans residues 17 to 214 (EIPKLEITKQ…WRSSIQSAKT (198 aa)). A helical transmembrane segment spans residues 292–312 (IFVVMIFFRLLGYVLFYLQYI).

Belongs to the TMCO5 family.

The protein resides in the membrane. The polypeptide is Transmembrane and coiled-coil domain-containing protein 5B (TMCO5B) (Bos taurus (Bovine)).